The chain runs to 475 residues: Dihydrolipoyl dehydrogenase (475 aa).

FAD contacts are provided by residues 39-47, Lys56, and Ala118; that span reads EKDAYGGTC. The cysteines at positions 47 and 52 are disulfide-linked. NAD(+) is bound by residues 186-190, Glu209, and 275-278; these read GGGYI and AVGR. FAD-binding residues include Asp318 and Ala327. His451 (proton acceptor) is an active-site residue.

It belongs to the class-I pyridine nucleotide-disulfide oxidoreductase family. Homodimer. The cofactor is FAD.

The protein resides in the cytoplasm. It carries out the reaction N(6)-[(R)-dihydrolipoyl]-L-lysyl-[protein] + NAD(+) = N(6)-[(R)-lipoyl]-L-lysyl-[protein] + NADH + H(+). The protein is Dihydrolipoyl dehydrogenase (lpdA) of Haloferax volcanii (strain ATCC 29605 / DSM 3757 / JCM 8879 / NBRC 14742 / NCIMB 2012 / VKM B-1768 / DS2) (Halobacterium volcanii).